A 592-amino-acid chain; its full sequence is Aspartate--tRNA(Asp/Asn) ligase (592 aa).

Glu-182 provides a ligand contact to L-aspartate. The segment at 206 to 209 (QIFK) is aspartate. Arg-228 contacts L-aspartate. Residues 228-230 (RDE) and Gln-237 each bind ATP. L-aspartate is bound at residue His-455. Glu-489 provides a ligand contact to ATP. Arg-496 contributes to the L-aspartate binding site. 541–544 (GLDR) contacts ATP.

This sequence belongs to the class-II aminoacyl-tRNA synthetase family. Type 1 subfamily. As to quaternary structure, homodimer.

The protein resides in the cytoplasm. It carries out the reaction tRNA(Asx) + L-aspartate + ATP = L-aspartyl-tRNA(Asx) + AMP + diphosphate. In terms of biological role, aspartyl-tRNA synthetase with relaxed tRNA specificity since it is able to aspartylate not only its cognate tRNA(Asp) but also tRNA(Asn). Reaction proceeds in two steps: L-aspartate is first activated by ATP to form Asp-AMP and then transferred to the acceptor end of tRNA(Asp/Asn). The polypeptide is Aspartate--tRNA(Asp/Asn) ligase (Thermoanaerobacter pseudethanolicus (strain ATCC 33223 / 39E) (Clostridium thermohydrosulfuricum)).